The sequence spans 373 residues: Inhibitor of nuclear factor kappa-B kinase-interacting protein (373 aa).

The span at 1-11 (MSEVKSRKKPG) shows a compositional bias: basic residues. The segment at 1–38 (MSEVKSRKKPGPKVAAPEPEKRSDGRKNPEARGDAGWA) is disordered. Basic and acidic residues predominate over residues 18 to 33 (EPEKRSDGRKNPEARG). Residues 43 to 59 (GLSLLSLAMTLGLAWLV) form a helical membrane-spanning segment. Coiled coils occupy residues 86–257 (LQSK…NKLS) and 285–324 (QDLIGTERKMEELTMQMFNMEDDMLRAVSEIMEMQKTLEG). N151 carries N-linked (GlcNAc...) asparagine glycosylation.

Post-translationally, N-glycosylated at Asn-151.

The protein resides in the endoplasmic reticulum membrane. Functionally, target of p53/TP53 with pro-apoptotic function. The sequence is that of Inhibitor of nuclear factor kappa-B kinase-interacting protein (Ikbip) from Mus musculus (Mouse).